The primary structure comprises 322 residues: Cytochrome c biogenesis protein CcsA (322 aa).

The next 7 helical transmembrane spans lie at 9-29 (ILTH…LITL), 43-63 (GMIA…IYSG), 70-90 (LYES…VPKI), 142-162 (MLLS…LLVI), 226-246 (VISL…VWAN), 259-274 (ETWA…IYSH), and 287-307 (AIVA…VNLL).

This sequence belongs to the CcmF/CycK/Ccl1/NrfE/CcsA family. In terms of assembly, may interact with Ccs1.

Its subcellular location is the plastid. It is found in the chloroplast thylakoid membrane. Required during biogenesis of c-type cytochromes (cytochrome c6 and cytochrome f) at the step of heme attachment. The chain is Cytochrome c biogenesis protein CcsA from Chloranthus spicatus (Chulantree).